Here is a 465-residue protein sequence, read N- to C-terminus: Biotin biosynthesis bifunctional protein BioCD (465 aa).

A malonyl-ACP O-methyltransferase region spans residues 1–254 (MTPFLPDRSI…AYGQWRKPRG (254 aa)). ATP contacts are provided by residues aspartate 234 and 263-268 (GVGKTL). The interval 255–465 (VFVTGTDTGV…DSLLSSNASR (211 aa)) is DTB synthetase. A Mg(2+)-binding site is contributed by threonine 267. Residue lysine 283 is part of the active site. Threonine 287 is a binding site for substrate. ATP-binding positions include aspartate 295, 351–354 (EGAG), and 435–437 (PQL). 2 residues coordinate Mg(2+): aspartate 295 and glutamate 351.

The protein in the N-terminal section; belongs to the methyltransferase superfamily. It in the C-terminal section; belongs to the dethiobiotin synthetase family. It depends on Mg(2+) as a cofactor.

It localises to the cytoplasm. It carries out the reaction (7R,8S)-7,8-diammoniononanoate + CO2 + ATP = (4R,5S)-dethiobiotin + ADP + phosphate + 3 H(+). The catalysed reaction is malonyl-[ACP] + S-adenosyl-L-methionine = malonyl-[ACP] methyl ester + S-adenosyl-L-homocysteine. It functions in the pathway cofactor biosynthesis; biotin biosynthesis; biotin from 7,8-diaminononanoate: step 1/2. The protein operates within cofactor biosynthesis; biotin biosynthesis. Converts the free carboxyl group of a malonyl-thioester to its methyl ester by transfer of a methyl group from S-adenosyl-L-methionine (SAM). It allows synthesis of pimeloyl-ACP via the fatty acid synthetic pathway. Functionally, catalyzes a mechanistically unusual reaction, the ATP-dependent insertion of CO2 between the N7 and N8 nitrogen atoms of 7,8-diaminopelargonic acid (DAPA, also called 7,8-diammoniononanoate) to form a ureido ring. This is Biotin biosynthesis bifunctional protein BioCD from Bordetella avium (strain 197N).